Reading from the N-terminus, the 178-residue chain is Ribonuclease M5 (178 aa).

Residues 4-100 (NEFIVVEGRD…KIGVEHADLI (97 aa)) form the Toprim domain. E10, D56, and D58 together coordinate Mg(2+).

This sequence belongs to the ribonuclease M5 family. Mg(2+) serves as cofactor.

The protein resides in the cytoplasm. It catalyses the reaction Endonucleolytic cleavage of RNA, removing 21 and 42 nucleotides, respectively, from the 5'- and 3'-termini of a 5S-rRNA precursor.. Required for correct processing of both the 5' and 3' ends of 5S rRNA precursor. Cleaves both sides of a double-stranded region yielding mature 5S rRNA in one step. The protein is Ribonuclease M5 of Staphylococcus aureus (strain NCTC 8325 / PS 47).